An 86-amino-acid chain; its full sequence is Polcalcin Che a 3 (86 aa).

EF-hand domains are found at residues 8–43 (QDIADRERIFKRFDTNGDGKISSSELGDALKTLGSV) and 43–78 (VTPDEVRRMMAEIDTDGDGFISFDEFTDFARANRGL). Positions 21, 23, 25, 27, 32, 56, 58, 60, and 67 each coordinate Ca(2+).

This is Polcalcin Che a 3 from Chenopodium album (Fat hen).